A 494-amino-acid chain; its full sequence is Sugar phosphate exchanger 3 (494 aa).

Residues 10 to 30 (GALLTSFSHHHLAVFLLTFFS) traverse the membrane as a helical segment. A glycan (N-linked (GlcNAc...) asparagine) is linked at Asn58. Helical transmembrane passes span 81–101 (TLFL…GLFI), 113–133 (WVLS…GTLT), 146–166 (GLWI…VAVM), 177–197 (VVFG…AFLA), and 209–229 (FLVT…GLLV). The interval 240–261 (GAEESSEEDSQRPLIDGAENED) is disordered. Transmembrane regions (helical) follow at residues 297–317 (LAYA…PFYL), 333–353 (IWYD…SDVL), 357–377 (APVL…YSRS), 386–406 (LLMT…SSAI), 428–448 (GIVD…VSLI), and 457–477 (VFYF…PLIV).

The protein belongs to the major facilitator superfamily. Organophosphate:Pi antiporter (OPA) (TC 2.A.1.4) family. In terms of assembly, interacts with ATRAID; the interaction is direct and both proteins are mutually dependent for their stability. Glycosylated.

Its subcellular location is the endoplasmic reticulum membrane. The protein resides in the lysosome membrane. Its function is as follows. Unlike the other SLC37 members, lacks glucose-6-phosphate antiporter activity. In osteoclasts, forms a transporter complex with ATRAID for nitrogen-containing-bisphophonates (N-BPs) required for releasing N-BP molecules that have trafficked to lysosomes through fluid-phase endocytosis into the cytosol. In Mus musculus (Mouse), this protein is Sugar phosphate exchanger 3 (Slc37a3).